A 205-amino-acid chain; its full sequence is Methylthioribulose-1-phosphate dehydratase (205 aa).

Zn(2+) is bound by residues His98 and His100.

It belongs to the aldolase class II family. MtnB subfamily. Requires Zn(2+) as cofactor.

It carries out the reaction 5-(methylsulfanyl)-D-ribulose 1-phosphate = 5-methylsulfanyl-2,3-dioxopentyl phosphate + H2O. Its pathway is amino-acid biosynthesis; L-methionine biosynthesis via salvage pathway; L-methionine from S-methyl-5-thio-alpha-D-ribose 1-phosphate: step 2/6. In terms of biological role, catalyzes the dehydration of methylthioribulose-1-phosphate (MTRu-1-P) into 2,3-diketo-5-methylthiopentyl-1-phosphate (DK-MTP-1-P). In Gluconacetobacter diazotrophicus (strain ATCC 49037 / DSM 5601 / CCUG 37298 / CIP 103539 / LMG 7603 / PAl5), this protein is Methylthioribulose-1-phosphate dehydratase.